The chain runs to 489 residues: Capsid protein (489 aa).

The tract at residues 79–144 is disordered; that stretch reads GETSEEESDS…QPKTIPGQKQ (66 aa). The span at 81–94 shows a compositional bias: acidic residues; that stretch reads TSEEESDSGEEPEF. A compositionally biased stretch (basic and acidic residues) spans 95–110; sequence EQVRMDRTGGTEIPKE. Positions 122–125 match the Nuclear localization signal motif; sequence RKRK. Residues 135 to 144 are compositionally biased toward polar residues; that stretch reads QPKTIPGQKQ. The CCHC-type zinc finger occupies 412 to 429; sequence CRCWICNIEGHYANECPN. The interval 467–489 is disordered; the sequence is EEEEETSTEESDGSSTSEDSDSD.

Belongs to the caulimoviridae capsid protein family. In terms of assembly, interacts (via nuclear localization signal) with host importin alpha.

Its subcellular location is the virion. The protein localises to the host nucleus. Self assembles to form an icosahedral capsid, about 50 nm in diameter, nm, composed of 420 subunits of the viral capsid protein. The capsid encapsulates the genomic dsDNA. Following virus entry into host cell, provides nuclear import of the viral genome. Virus particles do not enter the nucleus, but dock at the nuclear membrane through the interaction with host importins. The sequence is that of Capsid protein from Arabidopsis thaliana (Mouse-ear cress).